The primary structure comprises 108 residues: Zinc finger protein 475 (108 aa).

C2HC/C3H-type zinc fingers lie at residues 6–35 (PAVV…KWHN) and 79–108 (QLVP…KAAK). The Zn(2+) site is built by Cys-10, Cys-13, His-25, Cys-29, Cys-83, Cys-86, His-98, and Cys-102.

Zn(2+) serves as cofactor.

This chain is Zinc finger protein 475, found in Homo sapiens (Human).